Here is a 217-residue protein sequence, read N- to C-terminus: Thiopurine S-methyltransferase (217 aa).

S-adenosyl-L-methionine-binding residues include Trp11, Leu46, Glu67, and Arg122.

This sequence belongs to the class I-like SAM-binding methyltransferase superfamily. TPMT family.

The protein resides in the cytoplasm. The catalysed reaction is S-adenosyl-L-methionine + a thiopurine = S-adenosyl-L-homocysteine + a thiopurine S-methylether.. This Vibrio vulnificus (strain YJ016) protein is Thiopurine S-methyltransferase.